The sequence spans 150 residues: 3-hydroxyacyl-[acyl-carrier-protein] dehydratase FabZ (150 aa).

The active site involves H54.

Belongs to the thioester dehydratase family. FabZ subfamily.

It is found in the cytoplasm. It carries out the reaction a (3R)-hydroxyacyl-[ACP] = a (2E)-enoyl-[ACP] + H2O. Involved in unsaturated fatty acids biosynthesis. Catalyzes the dehydration of short chain beta-hydroxyacyl-ACPs and long chain saturated and unsaturated beta-hydroxyacyl-ACPs. The protein is 3-hydroxyacyl-[acyl-carrier-protein] dehydratase FabZ of Chromobacterium violaceum (strain ATCC 12472 / DSM 30191 / JCM 1249 / CCUG 213 / NBRC 12614 / NCIMB 9131 / NCTC 9757 / MK).